The following is a 751-amino-acid chain: Photosystem I P700 chlorophyll a apoprotein A1 (751 aa).

8 consecutive transmembrane segments (helical) span residues Val73–Ala96, Leu159–His182, Leu198–Leu222, Thr294–Tyr312, Trp349–Tyr372, Leu388–Ile414, Ala436–His458, and Phe533–Leu551. The [4Fe-4S] cluster site is built by Cys575 and Cys584. Helical transmembrane passes span His591 to Trp612 and Leu665 to Phe687. A chlorophyll a'-binding site is contributed by His676. Chlorophyll a-binding residues include Met684 and Tyr692. A phylloquinone-binding site is contributed by Trp693. The chain crosses the membrane as a helical span at residues Ala725–Ala745.

The protein belongs to the PsaA/PsaB family. As to quaternary structure, the PsaA/B heterodimer binds the P700 chlorophyll special pair and subsequent electron acceptors. PSI consists of a core antenna complex that captures photons, and an electron transfer chain that converts photonic excitation into a charge separation. The eukaryotic PSI reaction center is composed of at least 11 subunits. The cofactor is P700 is a chlorophyll a/chlorophyll a' dimer, A0 is one or more chlorophyll a, A1 is one or both phylloquinones and FX is a shared 4Fe-4S iron-sulfur center..

Its subcellular location is the plastid. It localises to the chloroplast thylakoid membrane. The enzyme catalyses reduced [plastocyanin] + hnu + oxidized [2Fe-2S]-[ferredoxin] = oxidized [plastocyanin] + reduced [2Fe-2S]-[ferredoxin]. PsaA and PsaB bind P700, the primary electron donor of photosystem I (PSI), as well as the electron acceptors A0, A1 and FX. PSI is a plastocyanin/cytochrome c6-ferredoxin oxidoreductase, converting photonic excitation into a charge separation, which transfers an electron from the donor P700 chlorophyll pair to the spectroscopically characterized acceptors A0, A1, FX, FA and FB in turn. Oxidized P700 is reduced on the lumenal side of the thylakoid membrane by plastocyanin or cytochrome c6. The protein is Photosystem I P700 chlorophyll a apoprotein A1 of Tupiella akineta (Green alga).